Consider the following 96-residue polypeptide: Transcription and mRNA export factor SUS1 (96 aa).

Lys68 is covalently cross-linked (Glycyl lysine isopeptide (Lys-Gly) (interchain with G-Cter in ubiquitin)).

It belongs to the ENY2 family. In terms of assembly, component of the nuclear pore complex (NPC)-associated TREX-2 complex (transcription and export complex 2), composed of at least SUS1, SAC3, THP1, SEM1, and CDC31. TREX-2 contains 2 SUS1 chains. The TREX-2 complex interacts with the nucleoporin NUP1. Component of the 1.8 MDa SAGA transcription coactivator-HAT complex. SAGA is built of 5 distinct domains with specialized functions. Within the SAGA complex, SUS1, SGF11, SGF73 and UBP8 form an additional subcomplex of SAGA called the DUB module (deubiquitination module). Interacts directly with THP1, SAC3, SGF11, and with the RNA polymerase II.

It is found in the nucleus. It localises to the nucleoplasm. The protein localises to the cytoplasm. The protein resides in the P-body. Its function is as follows. Involved in mRNA export coupled transcription activation by association with both the TREX-2 and the SAGA complexes. At the promoters, SAGA is required for recruitment of the basal transcription machinery. It influences RNA polymerase II transcriptional activity through different activities such as TBP interaction and promoter selectivity, interaction with transcription activators, and chromatin modification through histone acetylation and deubiquitination. Within the SAGA complex, participates in a subcomplex required for deubiquitination of H2B and for the maintenance of steady-state H3 methylation levels. The TREX-2 complex functions in docking export-competent ribonucleoprotein particles (mRNPs) to the nuclear entrance of the nuclear pore complex (nuclear basket). TREX-2 participates in mRNA export and accurate chromatin positioning in the nucleus by tethering genes to the nuclear periphery. May also be involved in cytoplasmic mRNA decay by interaction with components of P-bodies. The polypeptide is Transcription and mRNA export factor SUS1 (Saccharomyces cerevisiae (strain RM11-1a) (Baker's yeast)).